A 569-amino-acid chain; its full sequence is 4-hydroxy-7-methoxy-3-oxo-3,4-dihydro-2H-1,4-benzoxazin-2-yl glucoside beta-D-glucosidase 1b, chloroplastic (569 aa).

A chloroplast-targeting transit peptide spans 1–50 (MALLAAATLNPTTHLSLRSRAGRNSENLWLRSTASSQKSKGRFCNLTIRA). A beta-D-glucoside contacts are provided by residues Q92, H194, and 239 to 240 (NE). Residue E240 is the Proton donor of the active site. A disulfide bond links C259 and C265. Residues Y383, E456, W504, 511-512 (EW), and F520 contribute to the a beta-D-glucoside site. The active-site Nucleophile is E456.

The protein belongs to the glycosyl hydrolase 1 family. In terms of assembly, homo- and heterohexamers. As to expression, expressed in young seedlings early after germination.

The protein resides in the plastid. The protein localises to the chloroplast. It carries out the reaction Hydrolysis of terminal, non-reducing beta-D-glucosyl residues with release of beta-D-glucose.. The catalysed reaction is DIMBOA beta-D-glucoside + H2O = DIMBOA + D-glucose. It catalyses the reaction DIBOA beta-D-glucoside + H2O = DIBOA + D-glucose. Functionally, acts in defense of young plant parts against pests via the production of hydroxamic acids from hydroxamic acid glucosides. Enzymatic activity is highly correlated with plant growth. The preferred substrate is DIMBOA-beta-D-glucoside. The chain is 4-hydroxy-7-methoxy-3-oxo-3,4-dihydro-2H-1,4-benzoxazin-2-yl glucoside beta-D-glucosidase 1b, chloroplastic (GLU1B) from Triticum aestivum (Wheat).